A 360-amino-acid chain; its full sequence is 3-isopropylmalate dehydrogenase (360 aa).

76–89 (GPKWDTIERDIRPE) serves as a coordination point for NAD(+). Substrate is bound by residues Arg-96, Arg-106, Arg-134, and Asp-224. Asp-224, Asp-248, and Asp-252 together coordinate Mg(2+). Position 282-294 (282-294 (GSAPDIAGKGIAN)) interacts with NAD(+).

This sequence belongs to the isocitrate and isopropylmalate dehydrogenases family. LeuB type 1 subfamily. In terms of assembly, homodimer. Mg(2+) is required as a cofactor. Mn(2+) serves as cofactor.

The protein localises to the cytoplasm. It carries out the reaction (2R,3S)-3-isopropylmalate + NAD(+) = 4-methyl-2-oxopentanoate + CO2 + NADH. The protein operates within amino-acid biosynthesis; L-leucine biosynthesis; L-leucine from 3-methyl-2-oxobutanoate: step 3/4. Its function is as follows. Catalyzes the oxidation of 3-carboxy-2-hydroxy-4-methylpentanoate (3-isopropylmalate) to 3-carboxy-4-methyl-2-oxopentanoate. The product decarboxylates to 4-methyl-2 oxopentanoate. The sequence is that of 3-isopropylmalate dehydrogenase from Pseudomonas savastanoi pv. phaseolicola (strain 1448A / Race 6) (Pseudomonas syringae pv. phaseolicola (strain 1448A / Race 6)).